Here is a 446-residue protein sequence, read N- to C-terminus: Exodeoxyribonuclease 7 large subunit (446 aa).

It belongs to the XseA family. In terms of assembly, heterooligomer composed of large and small subunits.

The protein resides in the cytoplasm. The catalysed reaction is Exonucleolytic cleavage in either 5'- to 3'- or 3'- to 5'-direction to yield nucleoside 5'-phosphates.. Bidirectionally degrades single-stranded DNA into large acid-insoluble oligonucleotides, which are then degraded further into small acid-soluble oligonucleotides. This chain is Exodeoxyribonuclease 7 large subunit, found in Staphylococcus carnosus (strain TM300).